A 220-amino-acid polypeptide reads, in one-letter code: Serine protease-like protein 51 (220 aa).

The signal sequence occupies residues 1–16; the sequence is MFQLLIPLLLALKGHA. The region spanning 23–220 is the Peptidase S1 domain; that stretch reads VQCGHRPAFP…SSKWVSSVGA (198 aa). N33 carries an N-linked (GlcNAc...) asparagine glycan. C64 and C80 are disulfide-bonded. N-linked (GlcNAc...) asparagine glycosylation is present at N92. C157 and C170 are oxidised to a cystine.

This sequence belongs to the peptidase S1 family.

It localises to the secreted. This is Serine protease-like protein 51 from Homo sapiens (Human).